The following is a 252-amino-acid chain: Small ribosomal subunit protein uS2 (252 aa).

A disordered region spans residues 231-252; sequence SVESTAQEQVEETAQEETAVEA. Over residues 239-252 the composition is skewed to acidic residues; that stretch reads QVEETAQEETAVEA.

This sequence belongs to the universal ribosomal protein uS2 family.

The polypeptide is Small ribosomal subunit protein uS2 (Acetivibrio thermocellus (strain ATCC 27405 / DSM 1237 / JCM 9322 / NBRC 103400 / NCIMB 10682 / NRRL B-4536 / VPI 7372) (Clostridium thermocellum)).